A 419-amino-acid polypeptide reads, in one-letter code: DNA primase DnaG (419 aa).

Residues 168 to 244 enclose the Toprim domain; sequence DTIIVVEGRS…KVDYVARAPE (77 aa). E174, D218, and D220 together coordinate Mg(2+). Basic and acidic residues-rich tracts occupy residues 280 to 291 and 306 to 316; these read KPAEEAVKREEE and KAAKPPEEKPP. The interval 280–317 is disordered; that stretch reads KPAEEAVKREEEAAAEAKPPAPAVQEKAAKPPEEKPPT.

Belongs to the archaeal DnaG primase family. As to quaternary structure, forms a ternary complex with MCM helicase and DNA. Component of the archaeal exosome complex. Mg(2+) is required as a cofactor.

The catalysed reaction is ssDNA + n NTP = ssDNA/pppN(pN)n-1 hybrid + (n-1) diphosphate.. Its function is as follows. RNA polymerase that catalyzes the synthesis of short RNA molecules used as primers for DNA polymerase during DNA replication. Also part of the exosome, which is a complex involved in RNA degradation. Acts as a poly(A)-binding protein that enhances the interaction between heteromeric, adenine-rich transcripts and the exosome. The sequence is that of DNA primase DnaG from Aeropyrum pernix (strain ATCC 700893 / DSM 11879 / JCM 9820 / NBRC 100138 / K1).